Consider the following 908-residue polypeptide: Autophagy-related protein 9 (908 aa).

The Cytoplasmic segment spans residues M1–R216. The disordered stretch occupies residues S64 to H162. Residues V217 to V237 traverse the membrane as a helical segment. The Lumenal portion of the chain corresponds to D238–N259. N-linked (GlcNAc...) asparagine glycosylation occurs at N259. Residues M260–I280 traverse the membrane as a helical segment. Residues Q281 to R433 lie on the Cytoplasmic side of the membrane. Residues F434–I454 lie within the membrane without spanning it. Topologically, residues V455 to S525 are cytoplasmic. A helical transmembrane segment spans residues F526–F546. Over L547–R555 the chain is Lumenal. Residues T556 to S576 form a helical membrane-spanning segment. The Cytoplasmic portion of the chain corresponds to E577 to K622. An intramembrane segment occupies L623–S643. At L644–R908 the chain is on the cytoplasmic side. Disordered stretches follow at residues A751 to A779 and Q809 to V878. Over residues G813–S825 the composition is skewed to gly residues. Residues Q839–L852 show a composition bias toward basic and acidic residues.

Belongs to the ATG9 family. As to quaternary structure, homotrimer; forms a homotrimer with a central pore that forms a path between the two membrane leaflets. Phosphorylated by apg-1. Apg-1 phosphorylation is required for preautophagosome elongation.

The protein localises to the preautophagosomal structure membrane. It is found in the cytoplasmic vesicle membrane. Its subcellular location is the golgi apparatus membrane. The protein resides in the endoplasmic reticulum membrane. The enzyme catalyses a 1,2-diacyl-sn-glycero-3-phosphocholine(in) = a 1,2-diacyl-sn-glycero-3-phosphocholine(out). It catalyses the reaction a 1,2-diacyl-sn-glycero-3-phospho-L-serine(in) = a 1,2-diacyl-sn-glycero-3-phospho-L-serine(out). The catalysed reaction is a 1,2-diacyl-sn-glycero-3-phosphoethanolamine(in) = a 1,2-diacyl-sn-glycero-3-phosphoethanolamine(out). It carries out the reaction a 1,2-diacyl-sn-glycero-3-phospho-(1D-myo-inositol-3-phosphate)(in) = a 1,2-diacyl-sn-glycero-3-phospho-(1D-myo-inositol-3-phosphate)(out). Its function is as follows. Phospholipid scramblase involved in autophagy and cytoplasm to vacuole transport (Cvt) vesicle formation. Cycles between the preautophagosomal structure/phagophore assembly site (PAS) and the cytoplasmic vesicle pool and supplies membrane for the growing autophagosome. Lipid scramblase activity plays a key role in preautophagosomal structure/phagophore assembly by distributing the phospholipids that arrive through atg-2 from the cytoplasmic to the luminal leaflet of the bilayer, thereby driving autophagosomal membrane expansion. Required for mitophagy. Also involved in endoplasmic reticulum-specific autophagic process and is essential for the survival of cells subjected to severe ER stress. Different machineries are required for anterograde trafficking to the PAS during either the Cvt pathway or bulk autophagy and for retrograde trafficking. The chain is Autophagy-related protein 9 (apg-7) from Neurospora crassa (strain ATCC 24698 / 74-OR23-1A / CBS 708.71 / DSM 1257 / FGSC 987).